The sequence spans 293 residues: uncharacterized protein (293 aa).

Disordered regions lie at residues 1–23 (MGWP…AQTD) and 52–83 (ELQS…SELS). The span at 8–17 (KPEDSKEEHG) shows a compositional bias: basic and acidic residues. Residues 52 to 71 (ELQSYSHTSESPVETKTPTT) are compositionally biased toward polar residues.

This is an uncharacterized protein from Mus musculus (Mouse).